Reading from the N-terminus, the 165-residue chain is Lipoprotein signal peptidase (165 aa).

4 consecutive transmembrane segments (helical) span residues 7 to 27, 46 to 66, 72 to 92, and 100 to 120; these read YFSSSSSMLPWLGIAAVLVLL, AVTSFFNLVLVYNKGAAFSFL, WQRYFFTIMGIGAAIFIIYLL, and LFCWALALILGGAIGNVIDRV. Residues D127 and D145 contribute to the active site. The helical transmembrane segment at 136-156 threads the bilayer; it reads WHWPAFNIADSAICIGAVLFI.

Belongs to the peptidase A8 family.

The protein resides in the cell inner membrane. It carries out the reaction Release of signal peptides from bacterial membrane prolipoproteins. Hydrolyzes -Xaa-Yaa-Zaa-|-(S,diacylglyceryl)Cys-, in which Xaa is hydrophobic (preferably Leu), and Yaa (Ala or Ser) and Zaa (Gly or Ala) have small, neutral side chains.. It participates in protein modification; lipoprotein biosynthesis (signal peptide cleavage). This protein specifically catalyzes the removal of signal peptides from prolipoproteins. This chain is Lipoprotein signal peptidase, found in Janthinobacterium sp. (strain Marseille) (Minibacterium massiliensis).